Consider the following 525-residue polypeptide: GMP synthase [glutamine-hydrolyzing] (525 aa).

The Glutamine amidotransferase type-1 domain maps to R9–L207. C86 functions as the Nucleophile in the catalytic mechanism. Active-site residues include H181 and E183. In terms of domain architecture, GMPS ATP-PPase spans W208–R400. Residue S235–S241 coordinates ATP.

As to quaternary structure, homodimer.

It carries out the reaction XMP + L-glutamine + ATP + H2O = GMP + L-glutamate + AMP + diphosphate + 2 H(+). The protein operates within purine metabolism; GMP biosynthesis; GMP from XMP (L-Gln route): step 1/1. Its function is as follows. Catalyzes the synthesis of GMP from XMP. This Pseudomonas entomophila (strain L48) protein is GMP synthase [glutamine-hydrolyzing].